An 89-amino-acid polypeptide reads, in one-letter code: Cell division protein ZapA (89 aa).

Belongs to the ZapA family. Type 2 subfamily. As to quaternary structure, homodimer. Interacts with FtsZ.

It localises to the cytoplasm. Functionally, activator of cell division through the inhibition of FtsZ GTPase activity, therefore promoting FtsZ assembly into bundles of protofilaments necessary for the formation of the division Z ring. It is recruited early at mid-cell but it is not essential for cell division. This chain is Cell division protein ZapA, found in Bacillus thuringiensis (strain Al Hakam).